The following is a 58-amino-acid chain: uncharacterized protein (58 aa).

2 disordered regions span residues 1–20 (MKKNRHSRDMQNHKKPMNKK) and 38–58 (IIETLEVTKPEKKKEKNKKQQ).

This is an uncharacterized protein from Bacillus subtilis (strain 168).